A 762-amino-acid polypeptide reads, in one-letter code: Polymeric immunoglobulin receptor (762 aa).

An N-terminal signal peptide occupies residues Met-1–Met-18. Residues Lys-19–Ser-120 enclose the Ig-like V-type 1; required for binding to polymeric IgA and IgM domain. At Lys-19 to Lys-636 the chain is on the extracellular side. Disulfide bonds link Cys-40–Cys-110 and Cys-56–Cys-64. N-linked (GlcNAc...) asparagine glycosylation is found at Asn-83 and Asn-135. Ig-like V-type domains are found at residues Gly-145–Val-238, Gly-251–Phe-351, Gly-363–Val-460, and Pro-464–Ala-563. Disulfide bonds link Cys-152/Cys-221, Cys-258/Cys-324, Cys-272/Cys-280, Cys-370/Cys-443, Cys-384/Cys-394, Cys-484/Cys-546, Cys-488/Cys-522, and Cys-498/Cys-505. N-linked (GlcNAc...) asparagine glycosylation occurs at Asn-291. Residue Asn-423 is glycosylated (N-linked (GlcNAc...) asparagine). A glycan (N-linked (GlcNAc...) asparagine) is linked at Asn-530. The segment at Phe-604–Ser-634 is disordered. A helical membrane pass occupies residues Val-637 to Leu-659. The Cytoplasmic portion of the chain corresponds to Arg-660–Ala-762.

In terms of assembly, interacts (mainly via CDR1-like domain) with dimeric IgA. Interacts (mainly via CDR2-like domain) with pentameric IgM. As to quaternary structure, either free or part of the secretory IgA (sIgA) complex that consists of two, four or five IgA monomers, and two additional non-Ig polypeptides, namely the JCHAIN and the secretory component (the proteolytic product of PIGR). Free secretory component interacts with bacterial antigens toxA of C.difficile and eae of E.coli. In terms of processing, N-glycosylated. Carries predominantly biantennary complex type glycans which are largely non-fucosylated. Sialylation with NeuAc is common, except for Asn-291 which carries exclusively high mannose glycans. N-glycans attached to Asn-83: Gal2GlcNAc2Man3GlcNAc2; Gal2GlcNAc2Man3GlcNAc2(Fuc); Gal1GlcNAc1Man4GlcNAc2(Fuc); Gal1GlcNAc1Man3GlcNAc2; Gal1GlcNAc1Man4GlcNAc2 and NeuAc1Gal2GlcNAc2Man3GlcNAc2. N-glycans attached to Asn-135: Gal2GlcNAc2Man3GlcNAc2; Gal1GlcNAc1Man3GlcNAc2 and NeuAc1Gal2GlcNAc2Man3GlcNAc2. N-glycans attached to Asn-291: Man5-8GlcNAc2. N-glycans attached to Asn-423: NeuAc1Gal2GlcNAc2Man3GlcNAc2. N-glycans attached to Asn-530: Gal2GlcNAc2Man3GlcNAc2; Gal1GlcNAc1Man3GlcNAc2 and NeuAc1Gal2GlcNAc2Man3GlcNAc2. N-glycosylation is required for anchoring IgA molecules to mucus but is not necessary for Ig binding.

It is found in the cell membrane. The protein resides in the secreted. In terms of biological role, mediates selective transcytosis of polymeric IgA and IgM across mucosal epithelial cells. Binds polymeric IgA and IgM at the basolateral surface of epithelial cells. The complex is then transported across the cell to be secreted at the apical surface. During this process, a cleavage occurs that separates the extracellular (known as the secretory component) from the transmembrane segment. Functionally, through its N-linked glycans ensures anchoring of secretory IgA (sIgA) molecules to mucus lining the epithelial surface to neutralize extracellular pathogens. On its own (free form) may act as a non-specific microbial scavenger to prevent pathogen interaction with epithelial cells. The chain is Polymeric immunoglobulin receptor (PIGR) from Equus asinus (Donkey).